Consider the following 475-residue polypeptide: Alpha,alpha-trehalose-phosphate synthase [UDP-forming] (475 aa).

Tyr93 and Asp147 together coordinate D-glucose 6-phosphate. The UDP site is built by Arg285 and Lys290. UDP-alpha-D-glucose contacts are provided by Arg285 and Lys290. Arg323 contributes to the D-glucose 6-phosphate binding site. 384-392 (DGMNLVSYE) contributes to the UDP-alpha-D-glucose binding site. 388–392 (LVSYE) is a UDP binding site.

Belongs to the glycosyltransferase 20 family.

The enzyme catalyses D-glucose 6-phosphate + UDP-alpha-D-glucose = alpha,alpha-trehalose 6-phosphate + UDP + H(+). The protein operates within carbohydrate biosynthesis. Its function is as follows. Synthase catalytic subunit of the trehalose synthase complex that catalyzes the production of trehalose from glucose-6-phosphate and UDP-alpha-D-glucose in a two step process. The protein is Alpha,alpha-trehalose-phosphate synthase [UDP-forming] of Pichia angusta (Yeast).